Consider the following 211-residue polypeptide: Protein-L-isoaspartate O-methyltransferase 2 (211 aa).

Ser-60 is a catalytic residue.

The protein belongs to the methyltransferase superfamily. L-isoaspartyl/D-aspartyl protein methyltransferase family.

Its subcellular location is the cytoplasm. The catalysed reaction is [protein]-L-isoaspartate + S-adenosyl-L-methionine = [protein]-L-isoaspartate alpha-methyl ester + S-adenosyl-L-homocysteine. In terms of biological role, catalyzes the methyl esterification of L-isoaspartyl residues in peptides and proteins that result from spontaneous decomposition of normal L-aspartyl and L-asparaginyl residues. It plays a role in the repair and/or degradation of damaged proteins. This Nitrosospira multiformis (strain ATCC 25196 / NCIMB 11849 / C 71) protein is Protein-L-isoaspartate O-methyltransferase 2.